Here is a 182-residue protein sequence, read N- to C-terminus: Receptor activity-modifying protein 2 (182 aa).

An N-terminal signal peptide occupies residues 1–45; that stretch reads MAPLRVERAPGGSQLAVTSAQRPAALRLPPLLLLLLLLLLGAVST. Topologically, residues 46–150 are extracellular; sequence SPESLNQSHP…VQPTFSDPPE (105 aa). N-linked (GlcNAc...) asparagine glycans are attached at residues Asn51, Asn92, and Asn137. 2 disulfide bridges follow: Cys76-Cys106 and Cys91-Cys138. A helical membrane pass occupies residues 151–172; sequence DVLLAMIIAPICLIPFLVTLVV. Topologically, residues 173–182 are cytoplasmic; sequence WRSKDGDAQA.

This sequence belongs to the RAMP family. In terms of assembly, heterodimer of CALCRL and RAMP2; the interaction forms the receptor complex for adrenomedullin/ADM. Heterodimer of CALCR and RAMP2; interaction forms the AMYR2 receptor complex for calcitonin/CALC and amylin/IAPP.

The protein resides in the cell membrane. Functionally, accessory protein that interacts with and modulates the function of G-protein coupled receptors including calcitonin gene-related peptide type 1 receptor (CALCRL) and calcitonin receptor (CALCR). Required for the transport of CALCRL to the plasma membrane. Together with CALCRL, form a receptor complex for adrenomedullin/ADM. Together with CALCR, act as a receptor complex for calcitonin/CT/CALC. Together with CALCR, also act as a receptor complex for amylin/IAPP. The sequence is that of Receptor activity-modifying protein 2 from Rattus norvegicus (Rat).